Reading from the N-terminus, the 644-residue chain is Exoribonuclease 2 (644 aa).

The 328-residue stretch at 189 to 516 folds into the RNB domain; sequence REDLTALDFV…NHRLLKAIIK (328 aa). One can recognise an S1 motif domain in the interval 561–643; it reads DSRFAAEIID…ETRSVIARPV (83 aa).

Belongs to the RNR ribonuclease family. RNase II subfamily.

Its subcellular location is the cytoplasm. The catalysed reaction is Exonucleolytic cleavage in the 3'- to 5'-direction to yield nucleoside 5'-phosphates.. Its function is as follows. Involved in mRNA degradation. Hydrolyzes single-stranded polyribonucleotides processively in the 3' to 5' direction. This Cronobacter sakazakii (strain ATCC BAA-894) (Enterobacter sakazakii) protein is Exoribonuclease 2.